The primary structure comprises 72 residues: Disintegrin sasaimin (72 aa).

Residues 1-72 (EAGEECDCGA…SAGCPRNPFH (72 aa)) enclose the Disintegrin domain. 6 cysteine pairs are disulfide-bonded: Cys6–Cys21, Cys8–Cys16, Cys15–Cys38, Cys29–Cys35, Cys34–Cys59, and Cys47–Cys66. The short motif at 51 to 53 (RGD) is the Cell attachment site element.

Belongs to the venom metalloproteinase (M12B) family. P-II subfamily. P-IIa sub-subfamily. As to quaternary structure, monomer. In terms of tissue distribution, expressed by the venom gland.

Its subcellular location is the secreted. In terms of biological role, inhibits ADP- (IC(50)=66 nM) and collagen-induced (IC(50)=100 nM) aggregation of human platelets. In vitro, inhibits adhesion of endothelial cells to vitronectin, type-I collagen and, to a lower degree, fibronectin and laminin. The sequence is that of Disintegrin sasaimin from Cerrophidion sasai (Costa Rica montane pitviper).